Here is a 74-residue protein sequence, read N- to C-terminus: Antimicrobial peptide 1 (74 aa).

A signal peptide spans 1–22 (MEIKYLLTVFLVLLIGSDYCQA). Lysine 40 is modified (lysine amide). Positions 46-74 (DLDGQIDRSRNFRKRDAELEELLSKLPIY) are excised as a propeptide.

Expressed by the venom gland.

The protein localises to the secreted. The protein resides in the target cell membrane. Functionally, has antibacterial activity against the Gram-positive bacteria S.aureus (MIC=20 uM), the Gram-negative bacteria E.coli (MIC=150 uM), and the yeast C.albicans (MIC=64 uM). Causes hemolysis on horse erythrocytes. The protein is Antimicrobial peptide 1 of Androctonus amoreuxi (African fattail scorpion).